We begin with the raw amino-acid sequence, 240 residues long: Uridylate kinase (240 aa).

An ATP-binding site is contributed by 12 to 15 (KLSG). The tract at residues 20 to 25 (GEQGNG) is involved in allosteric activation by GTP. Gly-54 provides a ligand contact to UMP. Residues Gly-55 and Arg-59 each coordinate ATP. UMP is bound by residues Asp-74 and 135 to 142 (TGNPYFST). Positions 163, 169, and 172 each coordinate ATP.

The protein belongs to the UMP kinase family. As to quaternary structure, homohexamer.

It localises to the cytoplasm. The catalysed reaction is UMP + ATP = UDP + ADP. It participates in pyrimidine metabolism; CTP biosynthesis via de novo pathway; UDP from UMP (UMPK route): step 1/1. Allosterically activated by GTP. Inhibited by UTP. Catalyzes the reversible phosphorylation of UMP to UDP. The protein is Uridylate kinase of Bacillus licheniformis (strain ATCC 14580 / DSM 13 / JCM 2505 / CCUG 7422 / NBRC 12200 / NCIMB 9375 / NCTC 10341 / NRRL NRS-1264 / Gibson 46).